Here is a 91-residue protein sequence, read N- to C-terminus: Defensin-like protein 220 (91 aa).

A signal peptide spans 1–19 (MKTIFFFITFIVLVSSCTS). Cystine bridges form between Cys-61-Cys-78, Cys-64-Cys-83, and Cys-68-Cys-85.

It belongs to the DEFL family.

It is found in the secreted. This Arabidopsis thaliana (Mouse-ear cress) protein is Defensin-like protein 220.